The primary structure comprises 481 residues: Xylulose kinase (481 aa).

Residue 81–82 (QH) coordinates substrate. Aspartate 239 serves as the catalytic Proton acceptor.

The protein belongs to the FGGY kinase family.

It carries out the reaction D-xylulose + ATP = D-xylulose 5-phosphate + ADP + H(+). Its function is as follows. Catalyzes the phosphorylation of D-xylulose to D-xylulose 5-phosphate. The sequence is that of Xylulose kinase from Streptomyces rubiginosus.